The following is a 779-amino-acid chain: Membrane metallo-endopeptidase-like 1 (779 aa).

Residues 1–27 are Cytoplasmic-facing; the sequence is MGKSEGPVGMVESAGRAGQKRPGFLEG. The helical; Signal-anchor for type II membrane protein transmembrane segment at 28-48 threads the bilayer; that stretch reads GLLLLLLLVTAALVALGVLYA. Residues 49–779 lie on the Lumenal side of the membrane; the sequence is DRRGKQLPRL…MHPKERCRVW (731 aa). In terms of domain architecture, Peptidase M13 spans 88 to 779; it reads VCTTPGCVIA…MHPKERCRVW (692 aa). 5 disulfide bridges follow: C89/C94, C112/C764, C120/C724, C175/C439, and C650/C776. Residue R135 participates in a peptide binding. N-linked (GlcNAc...) asparagine glycosylation is found at N177, N207, N350, and N530. The stretch at 515-560 forms a coiled coil; sequence LEEMNRRLDEEYSNLNFSEDLYFENSLQNLKVGAQRSLRKLREKVD. H613 contributes to the Zn(2+) binding site. E614 is a catalytic residue. H617 is a binding site for Zn(2+). N-linked (GlcNAc...) asparagine glycosylation is present at N657. E676 lines the Zn(2+) pocket. The active-site Proton donor is the D680.

It belongs to the peptidase M13 family. The cofactor is Zn(2+). Post-translationally, N-glycosylated. Predominantly expressed in testis. Weakly expressed in brain, kidney and heart.

Its subcellular location is the membrane. The protein localises to the secreted. It carries out the reaction Preferential cleavage of polypeptides between hydrophobic residues, particularly with Phe or Tyr at P1'.. Its activity is regulated as follows. Inhibited by thiorphan and phosphoramidon. In terms of biological role, metalloprotease involved in sperm function, possibly by modulating the processes of fertilization and early embryonic development. Degrades a broad variety of small peptides with a preference for peptides shorter than 3 kDa containing neutral bulky aliphatic or aromatic amino acid residues. Shares the same substrate specificity with MME and cleaves peptides at the same amide bond. The chain is Membrane metallo-endopeptidase-like 1 (MMEL1) from Homo sapiens (Human).